Here is a 433-residue protein sequence, read N- to C-terminus: 23S rRNA (uracil(1939)-C(5))-methyltransferase RlmD (433 aa).

The TRAM domain occupies 10–68; it reads RTTTRQIITVSVNDLDSFGQGVARHNGKTLFIPGLLPQENAEVTVTEDKKQYARAKVVR. [4Fe-4S] cluster contacts are provided by Cys-81, Cys-87, Cys-90, and Cys-162. S-adenosyl-L-methionine is bound by residues Gln-265, Phe-294, Asn-299, Glu-315, Asn-342, and Asp-363. Residue Cys-389 is the Nucleophile of the active site.

It belongs to the class I-like SAM-binding methyltransferase superfamily. RNA M5U methyltransferase family. RlmD subfamily.

It catalyses the reaction uridine(1939) in 23S rRNA + S-adenosyl-L-methionine = 5-methyluridine(1939) in 23S rRNA + S-adenosyl-L-homocysteine + H(+). Catalyzes the formation of 5-methyl-uridine at position 1939 (m5U1939) in 23S rRNA. The chain is 23S rRNA (uracil(1939)-C(5))-methyltransferase RlmD from Escherichia coli (strain UTI89 / UPEC).